We begin with the raw amino-acid sequence, 795 residues long: Phenylalanine--tRNA ligase beta subunit (795 aa).

The region spanning 39–148 (AGSFHGVVVG…ADAPIGTDIR (110 aa)) is the tRNA-binding domain. Residues 401–476 (PKRATITLRR…RVYGYNNIPD (76 aa)) form the B5 domain. Asp-454, Asp-460, Glu-463, and Glu-464 together coordinate Mg(2+). An FDX-ACB domain is found at 701-794 (SRFPANRRDI…LKERFQASLR (94 aa)).

The protein belongs to the phenylalanyl-tRNA synthetase beta subunit family. Type 1 subfamily. Tetramer of two alpha and two beta subunits. It depends on Mg(2+) as a cofactor.

Its subcellular location is the cytoplasm. The catalysed reaction is tRNA(Phe) + L-phenylalanine + ATP = L-phenylalanyl-tRNA(Phe) + AMP + diphosphate + H(+). This chain is Phenylalanine--tRNA ligase beta subunit, found in Escherichia coli O157:H7.